The sequence spans 73 residues: Arabinogalactan protein 16 (73 aa).

Positions 1-26 (MASRNSVTGFALFSFVFAVILSLAGA) are cleaved as a signal peptide. Gln-27 bears the Pyrrolidone carboxylic acid mark. 4-hydroxyproline occurs at positions 31, 33, and 35. Residues Pro-31, Pro-33, and Pro-35 are each glycosylated (O-linked (Ara...) hydroxyproline). The GPI-anchor amidated serine moiety is linked to residue Ser-37. The propeptide at 38–73 (DGTSIDQGIAYLLMVVALVLTYLIHPLDASSSYSFF) is removed in mature form.

It belongs to the AG-peptide AGP family. Post-translationally, contains 4-hydroxyproline; hydroxylated on Pro-31, Pro-33 and Pro-35. In terms of processing, O-glycosylated on hydroxyprolines; noncontiguous hydroxylproline residues are glycosylated with arabinogalactan. As to expression, predominantly expressed in flowers.

It localises to the cell membrane. Functionally, proteoglycan that seems to be implicated in diverse developmental roles such as differentiation, cell-cell recognition, embryogenesis and programmed cell death. This Arabidopsis thaliana (Mouse-ear cress) protein is Arabinogalactan protein 16.